The following is a 53-amino-acid chain: Rubredoxin-1 (53 aa).

The Rubredoxin-like domain occupies methionine 1–glutamate 53. Fe cation-binding residues include cysteine 6, cysteine 9, cysteine 39, and cysteine 42.

This sequence belongs to the rubredoxin family. It depends on Fe(3+) as a cofactor.

Rubredoxin is a small nonheme, iron protein lacking acid-labile sulfide. Its single Fe, chelated to 4 Cys, functions as an electron acceptor and may also stabilize the conformation of the molecule. The chain is Rubredoxin-1 (rubR1) from Clostridium perfringens (strain 13 / Type A).